A 365-amino-acid chain; its full sequence is Metallophosphoesterase 1 homolog (365 aa).

Residues 10–30 form a helical membrane-spanning segment; it reads PILLAIILVVYNEYFIFFIAF. The a divalent metal cation site is built by Asp54, Asp96, Asn132, His208, His262, and His264. The helical transmembrane segment at 319–339 threads the bilayer; the sequence is ILQIMVYIFGGIGIVILAFIL.

This sequence belongs to the metallophosphoesterase superfamily. MPPE1 family. It depends on Mn(2+) as a cofactor.

It is found in the endoplasmic reticulum-Golgi intermediate compartment membrane. Its subcellular location is the golgi apparatus. The protein localises to the cis-Golgi network membrane. Functionally, metallophosphoesterase required for transport of GPI-anchor proteins from the endoplasmic reticulum to the Golgi. Acts in lipid remodeling steps of GPI-anchor maturation by mediating the removal of a side-chain ethanolamine-phosphate (EtNP) from the second Man (Man2) of the GPI intermediate, an essential step for efficient transport of GPI-anchor proteins. The protein is Metallophosphoesterase 1 homolog of Caenorhabditis elegans.